We begin with the raw amino-acid sequence, 85 residues long: Arminin 6494 (85 aa).

Positions 1–18 (MKTVFAILFLAFIALTYA) are cleaved as a signal peptide. Positions 19-57 (RSYEDVKEEIKNEVEKEILEDLEEESDELNDKRKEINDA) are excised as a propeptide. Alanine amide is present on Ala82.

It belongs to the arminin family. As to expression, expressed in entodermal epithelium along the body column.

It localises to the secreted. The protein resides in the target cell membrane. Antimicrobial peptide with a broad-spectrum antimicrobial activity. Keeps its antibacterial activity under a wide range of salt concentrations that mimic physiological conditions of human blood, which is surprising, since Hydra is an obligate freshwater animal with nearly no salt tolerance. Does not affect red blood cells. The polypeptide is Arminin 6494 (Hydra vulgaris (Hydra)).